We begin with the raw amino-acid sequence, 344 residues long: Dihydroorotase (344 aa).

Positions 14 and 16 each coordinate Zn(2+). Substrate is bound by residues 16-18 and Asn42; that span reads HLR. Residues Lys99, His136, and His174 each coordinate Zn(2+). N6-carboxylysine is present on Lys99. His136 contacts substrate. Substrate is bound at residue Leu219. Asp247 contributes to the Zn(2+) binding site. Residue Asp247 is part of the active site. Residues His251 and Ala263 each coordinate substrate.

The protein belongs to the metallo-dependent hydrolases superfamily. DHOase family. Class II DHOase subfamily. As to quaternary structure, homodimer. The cofactor is Zn(2+).

It catalyses the reaction (S)-dihydroorotate + H2O = N-carbamoyl-L-aspartate + H(+). Its pathway is pyrimidine metabolism; UMP biosynthesis via de novo pathway; (S)-dihydroorotate from bicarbonate: step 3/3. Its function is as follows. Catalyzes the reversible cyclization of carbamoyl aspartate to dihydroorotate. The polypeptide is Dihydroorotase (Teredinibacter turnerae (strain ATCC 39867 / T7901)).